A 380-amino-acid polypeptide reads, in one-letter code: MANIRKTHPLLKIINGAFIDLPAPSNISVWWNSGSLLGLCLITQILTGLFLAMHYTADISTAFSSIAHICRDVNYGWLIRNIHANGASFFFICLYLHVARGMYYGSYLYKETWNIGVVLLLLTMMTAFVGYVLPWGQMSFWGATVITNLLSAFPYIGDTLVQWIWGGFSVDNATLTRFFAFHFLLPFVIAGASMIHLLFLHQTGSNNPTGLNSDADKVPFHPYFSYKDLLGFILMLIGLTAIALFSPNLLGDPDNFTPANPLVTPPHIKPEWYFLFAYAILRSIPNKLGGVLALLFSILVLMLVPILHTSKQRGNTFRPLSQILFWTLVADMLVLTWIGGQPVEHPFVLIGQVASTIYFALFLIALPLTGWLENKILNWN.

The next 4 helical transmembrane spans lie at 33 to 53 (SGSL…FLAM), 77 to 98 (WLIR…YLHV), 113 to 133 (WNIG…GYVL), and 178 to 198 (FFAF…IHLL). Positions 83 and 97 each coordinate heme b. 2 residues coordinate heme b: H182 and H196. H201 is an a ubiquinone binding site. 4 helical membrane passes run 226–246 (YKDL…ALFS), 288–308 (LGGV…PILH), 320–340 (LSQI…WIGG), and 347–367 (FVLI…IALP).

The protein belongs to the cytochrome b family. In terms of assembly, the cytochrome bc1 complex contains 3 respiratory subunits (MT-CYB, CYC1 and UQCRFS1), 2 core proteins (UQCRC1 and UQCRC2) and probably 6 low-molecular weight proteins. Heme b serves as cofactor.

The protein localises to the mitochondrion inner membrane. Functionally, component of the ubiquinol-cytochrome c reductase complex (complex III or cytochrome b-c1 complex) that is part of the mitochondrial respiratory chain. The b-c1 complex mediates electron transfer from ubiquinol to cytochrome c. Contributes to the generation of a proton gradient across the mitochondrial membrane that is then used for ATP synthesis. The sequence is that of Cytochrome b (mt-cyb) from Polyodon spathula (North American paddlefish).